The following is a 312-amino-acid chain: Ribosomal protein L11 methyltransferase (312 aa).

Residues T160, G181, D203, and N246 each coordinate S-adenosyl-L-methionine.

It belongs to the methyltransferase superfamily. PrmA family.

The protein localises to the cytoplasm. The enzyme catalyses L-lysyl-[protein] + 3 S-adenosyl-L-methionine = N(6),N(6),N(6)-trimethyl-L-lysyl-[protein] + 3 S-adenosyl-L-homocysteine + 3 H(+). Methylates ribosomal protein L11. In Staphylococcus aureus (strain MRSA252), this protein is Ribosomal protein L11 methyltransferase.